A 1363-amino-acid chain; its full sequence is MFLILLISLPMAFAVIGDLKCTTVSINDVDTGAPSISTDIVDVTNGLGTYYVLDRVYLNTTLLLNGYYPTSGSTYRNMALKGTLLLSRLWFKPPFLSDFINGIFAKVKNTKVIKKGVMYSEFPAITIGSTFVNTSYSVVVQPHTTNLDNKLQGLLEISVCQYTMCEYPHTICHPKLGNKRVELWHWDTGVVSCLYKRNFTYDVNADYLYFHFYQEGGTFYAYFTDTGVVTKFLFNVYLGTVLSHYYVLPLTCSSAMTLEYWVTPLTSKQYLLAFNQDGVIFNAVDCKSDFMSEIKCKTLSIAPSTGVYELNGYTVQPIADVYRRIPNLPDCNIEAWLNDKSVPSPLNWERKTFSNCNFNMSSLMSFIQADSFTCNNIDAAKIYGMCFSSITIDKFAIPNGRKVDLQLGNLGYLQSFNYRIDTTATSCQLYYNLPAANVSVSRFNPSTWNRRFGFTEQFVFKPQPVGVFTHHDVVYAQHCFKAPKNFCPCKLDGSLCVGNGPGIDAGYKNSGIGTCPAGTNYLTCHNAAQCDCLCTPDPITSKSTGPYKCPQTKYLVGIGEHCSGLAIKSDYCGGNPCTCQPQAFLGWSVDSCLQGDRCNIFANFIFHDVNSGTTCSTDLQKSNTDIILGVCVNYDLYGITGQGIFVEVNATYYNSWQNLLYDSNGNLYGFRDYLTNRTFMIRSCYSGRVSAAFHANSSEPALLFRNIKCNYVFNNTLSRQLQPINYFDSYLGCVVNADNSTSSVVQTCDLTVGSGYCVDYSTKRRSRRAITTGYRFTNFEPFTVNSVNDSLEPVGGLYEIQIPSEFTIGNMEEFIQTSSPKVTIDCSAFVCGDYAACKSQLVEYGSFCDNINAILTEVNELLDTTQLQVANSLMNGVTLSTKLKDGVNFNVDDINFSPVLGCLGSACNKVSSRSAIEDLLFSKVKLSDVGFVEAYNNCTGGAEIRDLICVQSYNGIKVLPPLLSVNQISGYTLAATSASLFPPLSAAVGVPFYLNVQYRINGIGVTMDVLSQNQKLIANAFNNALDAIQEGFDATNSALVKIQAVVNANAEALNNLLQQLSNRFGAISSSLQEILSRLDALEAQAQIDRLINGRLTALNVYVSQQLSDSTLVKFSAAQAMEKVNECVKSQSSRINFCGNGNHIISLVQNAPYGLYFIHFSYVPTKYVTAKVSPGLCIAGDRGIAPKSGYFVNVNNTWMFTGSGYYYPEPITGNNVVVMSTCAVNYTKAPDVMLNISTPNLHDFKEELDQWFKNQTSVAPDLSLDYINVTFLDLQDEMNRLQEAIKVLNQSYINLKDIGTYEYYVKWPWYVWLLIGFAGVAMLVLLFFICCCTGCGTSCFKICGGCCDDYTGHQELVIKTSHDD.

Residues Met-1–Phe-13 form the signal peptide. Residues Ala-14–Pro-1307 lie on the Extracellular side of the membrane. Positions Val-15–Thr-298 constitute a BetaCoV S1-NTD domain. 5 cysteine pairs are disulfide-bonded: Cys-21–Cys-165, Cys-160–Cys-193, Cys-172–Cys-252, Cys-286–Cys-296, and Cys-331–Cys-356. N-linked (GlcNAc...) asparagine; by host glycans are attached at residues Asn-59 and Asn-133. Asn-198 carries N-linked (GlcNAc...) asparagine; by host glycosylation. One can recognise a BetaCoV S1-CTD domain in the interval Pro-329 to Thr-617. The N-linked (GlcNAc...) asparagine; by host glycan is linked to Asn-359. 2 disulfide bridges follow: Cys-374–Cys-427 and Cys-386–Cys-615. N-linked (GlcNAc...) asparagine; by host glycosylation is found at Asn-437, Asn-649, Asn-676, Asn-696, Asn-714, Asn-739, and Asn-788. 2 fusion peptide regions span residues Ser-914–Tyr-935 and Glu-933–Tyr-953. Asn-937 carries an N-linked (GlcNAc...) asparagine; by host glycan. A disulfide bond links Cys-938 and Cys-949. The tract at residues Gln-1014–Phe-1064 is heptad repeat 1. Positions Gln-1043–Ile-1087 form a coiled coil. N-linked (GlcNAc...) asparagine; by host glycosylation is found at Asn-1194, Asn-1224, Asn-1234, Asn-1253, Asn-1267, and Asn-1288. Positions Ala-1258–Asp-1296 are heptad repeat 2. A coiled-coil region spans residues Thr-1269–Ile-1297. A helical membrane pass occupies residues Trp-1308–Ile-1328. The Cytoplasmic segment spans residues Cys-1329–Asp-1363. The short motif at Thr-1359–Asp-1363 is the KxHxx element.

It belongs to the betacoronaviruses spike protein family. As to quaternary structure, homotrimer; each monomer consists of a S1 and a S2 subunit. The resulting peplomers protrude from the virus surface as spikes. Specific enzymatic cleavages in vivo yield mature proteins. The precursor is processed into S1 and S2 by host cell furin or another cellular protease to yield the mature S1 and S2 proteins. Additionally, a second cleavage leads to the release of a fusion peptide after viral attachment to host cell receptor. In terms of processing, the cytoplasmic Cys-rich domain is palmitoylated. Spike glycoprotein is digested within host endosomes.

The protein localises to the virion membrane. It is found in the host endoplasmic reticulum-Golgi intermediate compartment membrane. The protein resides in the host cell membrane. Attaches the virion to the cell membrane by interacting with host receptor, initiating the infection. Functionally, mediates fusion of the virion and cellular membranes by acting as a class I viral fusion protein. Under the current model, the protein has at least three conformational states: pre-fusion native state, pre-hairpin intermediate state, and post-fusion hairpin state. During viral and target cell membrane fusion, the coiled coil regions (heptad repeats) assume a trimer-of-hairpins structure, positioning the fusion peptide in close proximity to the C-terminal region of the ectodomain. The formation of this structure appears to drive apposition and subsequent fusion of viral and target cell membranes. Its function is as follows. Acts as a viral fusion peptide which is unmasked following S2 cleavage occurring upon virus endocytosis. The protein is Spike glycoprotein of Bos taurus (Bovine).